Here is a 780-residue protein sequence, read N- to C-terminus: Ribosome biogenesis protein BOP1 homolog (780 aa).

The segment covering 1–11 (MTKKQAIKRKV) has biased composition (basic residues). The disordered stretch occupies residues 1–155 (MTKKQAIKRK…DSDTSDEEDI (155 aa)). Residues 17–26 (TNEQSSASEP) show a composition bias toward polar residues. Composition is skewed to acidic residues over residues 44–53 (EDTTDDEGID), 60–72 (SSED…DEEG), 83–113 (AEGD…DAEE), and 145–154 (EDSDTSDEED). WD repeat units lie at residues 441–482 (GHTD…RTIE), 484–522 (NDVV…KLLI), 566–608 (THFK…SQIP), 611–649 (KSKG…LIKK), 652–691 (TNSK…KPYQ), 695–734 (LHRN…DLLQ), and 750–780 (RDEF…RLYT).

This sequence belongs to the WD repeat BOP1/ERB1 family.

The protein resides in the nucleus. Its subcellular location is the nucleolus. It localises to the nucleoplasm. In terms of biological role, required for maturation of ribosomal RNAs and formation of the large ribosomal subunit. This is Ribosome biogenesis protein BOP1 homolog from Drosophila virilis (Fruit fly).